A 449-amino-acid chain; its full sequence is Chromosomal replication initiator protein DnaA (449 aa).

The segment at 1-75 (MDTNNDIEKR…EILSQNKVGM (75 aa)) is domain I, interacts with DnaA modulators. Residues 75 to 106 (MHLAHSVDVRIEVASKVHVSDHSNINYKATKS) are domain II. The segment at 107–321 (SIKDSYTFEN…GAIIKISVNA (215 aa)) is domain III, AAA+ region. ATP-binding residues include G151, G153, K154, and T155. Positions 322 to 449 (NLMNAPIDLN…LNELNDKKQH (128 aa)) are domain IV, binds dsDNA.

Belongs to the DnaA family. As to quaternary structure, oligomerizes as a right-handed, spiral filament on DNA at oriC.

It localises to the cytoplasm. Plays an essential role in the initiation and regulation of chromosomal replication. ATP-DnaA binds to the origin of replication (oriC) to initiate formation of the DNA replication initiation complex once per cell cycle. Binds the DnaA box (a 9 base pair repeat at the origin) and separates the double-stranded (ds)DNA. Forms a right-handed helical filament on oriC DNA; dsDNA binds to the exterior of the filament while single-stranded (ss)DNA is stabiized in the filament's interior. The ATP-DnaA-oriC complex binds and stabilizes one strand of the AT-rich DNA unwinding element (DUE), permitting loading of DNA polymerase. After initiation quickly degrades to an ADP-DnaA complex that is not apt for DNA replication. Binds acidic phospholipids. The protein is Chromosomal replication initiator protein DnaA of Helicobacter acinonychis (strain Sheeba).